Here is a 477-residue protein sequence, read N- to C-terminus: Homeobox protein Meis2 (477 aa).

A required for interaction with PBX1 region spans residues 71–191 (DALKRDKDAI…KMPIDLVIDE (121 aa)). One can recognise an MEIS N-terminal domain in the interval 110–193 (GGDVCSSDSF…PIDLVIDERD (84 aa)). Basic and acidic residues predominate over residues 193-203 (DGSSKSDHEEL). The tract at residues 193–283 (DGSSKSDHEE…KKRQKKRGIF (91 aa)) is disordered. Composition is skewed to polar residues over residues 204–217 (SGSS…NPSS) and 239–251 (GHAS…SSEQ). The segment at residues 276–338 (RQKKRGIFPK…NARRRIVQPM (63 aa)) is a DNA-binding region (homeobox; TALE-type). The segment at 299–333 (LTHPYPSEEQKKQLAQDTGLTILQVNNWFINARRR) is interaction with DNA. The tract at residues 340–477 (DQSNRAGFLL…GGQVMDIHAQ (138 aa)) is transcriptional activation domain.

The protein belongs to the TALE/MEIS homeobox family. As to quaternary structure, monomer and homodimer. Heterodimer with HOXB13. Isoform 2 interacts with TLX1. Isoform 3 interacts with HOXA13 and PBX1 isoform PBX1b. Isoform 4 interacts with SP1, SP3 and KLF4. Isoform 4 and isoform 5 interact with PBX1 isoform PBX1a; the interaction partially relieves MEIS2 autoinhibition. Isoform 3 also known as MEIS2b is part of a PDX1:PBX1b:Meis2B complex; Meis2B is recruited by PBX1b and can be replaced by isoform 4 in a small fraction of complexes. Can form trimeric complexes including HOXB8 and PBX2 or PBX3. As to expression, expressed in various tissues. Expressed at high level in the lymphoid organs of hematopoietic tissues. Also expressed in some regions of the brain, such as the putamen.

It is found in the nucleus. It localises to the cytoplasm. Its subcellular location is the perinuclear region. In terms of biological role, involved in transcriptional regulation. Binds to HOX or PBX proteins to form dimers, or to a DNA-bound dimer of PBX and HOX proteins and thought to have a role in stabilization of the homeoprotein-DNA complex. Isoform 3 is required for the activity of a PDX1:PBX1b:MEIS2b complex in pancreatic acinar cells involved in the transcriptional activation of the ELA1 enhancer; the complex binds to the enhancer B element and cooperates with the transcription factor 1 complex (PTF1) bound to the enhancer A element; MEIS2 is not involved in complex DNA-binding. Probably in complex with PBX1, is involved in transcriptional regulation by KLF4. Isoform 3 and isoform 4 can bind to a EPHA8 promoter sequence containing the DNA motif 5'-CGGTCA-3'; in cooperation with a PBX protein (such as PBX2) is proposed to be involved in the transcriptional activation of EPHA8 in the developing midbrain. May be involved in regulation of myeloid differentiation. Can bind to the DNA sequence 5'-TGACAG-3'in the activator ACT sequence of the D(1A) dopamine receptor (DRD1) promoter and activate DRD1 transcription; isoform 5 cannot activate DRD1 transcription. The chain is Homeobox protein Meis2 (MEIS2) from Homo sapiens (Human).